The following is a 328-amino-acid chain: Peroxidase 63 (328 aa).

The N-terminal stretch at 1–27 is a signal peptide; that stretch reads MAEQSQLKNLTIILLLLCLSFQSLSFA. 4 disulfides stabilise this stretch: cysteine 41–cysteine 122, cysteine 74–cysteine 79, cysteine 128–cysteine 324, and cysteine 207–cysteine 234. Catalysis depends on histidine 72, which acts as the Proton acceptor. Ca(2+) contacts are provided by aspartate 73, glycine 78, aspartate 80, and serine 82. Substrate is bound at residue proline 170. Histidine 200 is a binding site for heme b. Residue threonine 201 coordinates Ca(2+). Residues asparagine 217 and asparagine 218 are each glycosylated (N-linked (GlcNAc...) asparagine). Ca(2+) contacts are provided by aspartate 248, threonine 251, and aspartate 256.

It belongs to the peroxidase family. Classical plant (class III) peroxidase subfamily. The cofactor is heme b. Requires Ca(2+) as cofactor.

It is found in the secreted. It carries out the reaction 2 a phenolic donor + H2O2 = 2 a phenolic radical donor + 2 H2O. In terms of biological role, removal of H(2)O(2), oxidation of toxic reductants, biosynthesis and degradation of lignin, suberization, auxin catabolism, response to environmental stresses such as wounding, pathogen attack and oxidative stress. These functions might be dependent on each isozyme/isoform in each plant tissue. The protein is Peroxidase 63 (PER63) of Arabidopsis thaliana (Mouse-ear cress).